We begin with the raw amino-acid sequence, 499 residues long: Cobyric acid synthase (499 aa).

The region spanning 251-442 (SLDIAVVSLK…LHGVFDNLEW (192 aa)) is the GATase cobBQ-type domain. Cys-332 acts as the Nucleophile in catalysis. His-434 is an active-site residue.

This sequence belongs to the CobB/CobQ family. CobQ subfamily.

The protein operates within cofactor biosynthesis; adenosylcobalamin biosynthesis. In terms of biological role, catalyzes amidations at positions B, D, E, and G on adenosylcobyrinic A,C-diamide. NH(2) groups are provided by glutamine, and one molecule of ATP is hydrogenolyzed for each amidation. The sequence is that of Cobyric acid synthase from Streptococcus sanguinis (strain SK36).